Reading from the N-terminus, the 336-residue chain is Inositol 2-dehydrogenase (336 aa).

The protein belongs to the Gfo/Idh/MocA family. As to quaternary structure, homotetramer.

The enzyme catalyses myo-inositol + NAD(+) = scyllo-inosose + NADH + H(+). Involved in the oxidation of myo-inositol (MI) to 2-keto-myo-inositol (2KMI or 2-inosose). In Pseudomonas fluorescens (strain SBW25), this protein is Inositol 2-dehydrogenase.